A 289-amino-acid polypeptide reads, in one-letter code: Protoheme IX farnesyltransferase 2 (289 aa).

9 consecutive transmembrane segments (helical) span residues 13-33 (LEITILIDIVAIAAFLAVPGS), 37-57 (IYDLLILIFAGTLASMSASIF), 86-106 (LFFIIATAMVLLSFVTSFILL), 109-129 (VTSAFILGGFASYVLLYTIIL), 137-157 (IVIGGIAGSFPALAGWASITG), 159-179 (VSATSLFIAFLVFMWTPTHFW), 207-227 (EFWIMVNTSILVIYSILPLFI), 232-252 (VGLLYMPMAAVMDALLIYYVA), and 267-287 (AFHFSNMYMLMLLIGIMLILV).

It belongs to the UbiA prenyltransferase family. Protoheme IX farnesyltransferase subfamily.

Its subcellular location is the cell membrane. It catalyses the reaction heme b + (2E,6E)-farnesyl diphosphate + H2O = Fe(II)-heme o + diphosphate. The protein operates within porphyrin-containing compound metabolism; heme O biosynthesis; heme O from protoheme: step 1/1. Functionally, converts heme B (protoheme IX) to heme O by substitution of the vinyl group on carbon 2 of heme B porphyrin ring with a hydroxyethyl farnesyl side group. This Picrophilus torridus (strain ATCC 700027 / DSM 9790 / JCM 10055 / NBRC 100828 / KAW 2/3) protein is Protoheme IX farnesyltransferase 2.